Consider the following 518-residue polypeptide: DNA-binding protein Ikaros (518 aa).

A disordered region spans residues methionine 1 to arginine 51. The span at leucine 37–valine 47 shows a compositional bias: polar residues. 4 C2H2-type zinc fingers span residues leucine 117–histidine 139, phenylalanine 145–histidine 167, phenylalanine 173–histidine 195, and histidine 201–histidine 224. Positions serine 381–glutamate 405 are disordered. 2 consecutive C2H2-type zinc fingers follow at residues tyrosine 461–histidine 483 and phenylalanine 489–histidine 513.

Belongs to the Ikaros C2H2-type zinc-finger protein family. Expressed in embryonic hematopoietic organs such as the bursa of Fabricius, thymus and spleen. In the adult, expressed in spleen, thymus, bursa and peripheral blood leukocytes.

It localises to the nucleus. Functionally, binds and activates the enhancer (delta-A element) of the CD3-delta gene. Functions in the specification and the maturation of the T-lymphocyte. Also interacts with a critical control element in the TDT (terminal deoxynucleotidyltransferase) promoter as well as with the promoters for other genes expressed during early stages of B- and T-cell development. Function is isoform-specific and is modulated by dominant-negative inactive isoforms. This Gallus gallus (Chicken) protein is DNA-binding protein Ikaros (IKZF1).